A 517-amino-acid chain; its full sequence is MTTNIHDQRILILDFGSQYTQLVARRIREIGVYCELWSWDVEESDIRDFNPDGIILSGGPESVTEENSPRAPQYVFDSGVPVFGVCYGMQTMAEQLGGKVATSTEREFGYAAVQVTGESALFKDLEATQDVWMSHGDKVVEIPSDFVKIAETETCPYAVMANEEKKYYGVQFHPEVTHTKNGMKMLENFVLNVCGCEGLWTSASIIEDAVARIKEQVGDDEVILGLSGGVDSSVVAMLAHRAIGDKLTCVFVDNGLLRLNEADQVMEMFGNKFGLNIIHVNAEQRFLDALEGESDPEVKRKIIGHVFVDIFDEESKKLKNAKWLAQGTIYPDVIESAASKTGKAHVIKSHHNVGGLPDDMEMGLVEPLRELFKDEVRKIGLELGLPYNMLYRHPFPGPGLGVRVLGEIKKEYCDLLRRADAIFIEELHNADLYNKVSQAFTVFLPVRSVGVMGDGRKYDWVVSLRAVETIDFMTAHWAHLPYDFLGKVSNRIINEVNGISRVVYDISGKPPATIEWE.

Positions 9 to 199 (RILILDFGSQ…VLNVCGCEGL (191 aa)) constitute a Glutamine amidotransferase type-1 domain. Cysteine 86 serves as the catalytic Nucleophile. Residues histidine 173 and glutamate 175 contribute to the active site. Residues 200-392 (WTSASIIEDA…LGLPYNMLYR (193 aa)) enclose the GMPS ATP-PPase domain. ATP is bound at residue 227-233 (SGGVDSS).

As to quaternary structure, homodimer.

It catalyses the reaction XMP + L-glutamine + ATP + H2O = GMP + L-glutamate + AMP + diphosphate + 2 H(+). It functions in the pathway purine metabolism; GMP biosynthesis; GMP from XMP (L-Gln route): step 1/1. In terms of biological role, catalyzes the synthesis of GMP from XMP. This Aliivibrio fischeri (strain MJ11) (Vibrio fischeri) protein is GMP synthase [glutamine-hydrolyzing].